The chain runs to 327 residues: Fructose-1,6-bisphosphatase class 1 (327 aa).

The Mg(2+) site is built by E84, D103, L105, and D106. Substrate is bound by residues 106–109 (DGSS), N197, and K263. E269 is a Mg(2+) binding site.

It belongs to the FBPase class 1 family. Homotetramer. Mg(2+) serves as cofactor.

The protein resides in the cytoplasm. The catalysed reaction is beta-D-fructose 1,6-bisphosphate + H2O = beta-D-fructose 6-phosphate + phosphate. The protein operates within carbohydrate biosynthesis; gluconeogenesis. The protein is Fructose-1,6-bisphosphatase class 1 of Idiomarina loihiensis (strain ATCC BAA-735 / DSM 15497 / L2-TR).